Consider the following 356-residue polypeptide: 3'-5' exonuclease (356 aa).

The tract at residues 1–120 (MDKYLIKMPT…TPSPEKEKPE (120 aa)) is disordered. Composition is skewed to basic and acidic residues over residues 29 to 56 (TIDK…ENTP) and 71 to 85 (KNQD…IKNE). Positions 99–113 (LTRSTRSMAEEGTPS) are enriched in low complexity. Phosphoserine occurs at positions 105 and 113. One can recognise a 3'-5' exonuclease domain in the interval 155-316 (TTLDVVPMAF…GQVIYRDLEQ (162 aa)). Positions 165, 167, and 303 each coordinate Mg(2+).

It belongs to the WRNexo family.

The protein resides in the nucleus. Has exonuclease activity on both single-stranded and duplex templates bearing overhangs, but not blunt ended duplex DNA, and cleaves in a 3'-5' direction. Essential for the formation of DNA replication focal centers. Has an important role in maintaining genome stability. The protein is 3'-5' exonuclease of Drosophila willistoni (Fruit fly).